Here is a 200-residue protein sequence, read N- to C-terminus: High mobility group protein B3 (200 aa).

Lys3 is subject to N6-acetyllysine. 2 DNA-binding regions (HMG box) span residues 9–79 (PKGK…KDYG) and 93–161 (PKRP…ADYK). Cys23 carries the post-translational modification Cysteine sulfonic acid (-SO3H); alternate. A disulfide bond links Cys23 and Cys45. N6-acetyllysine occurs at positions 30 and 43. Cys45 is modified (cysteine sulfonic acid (-SO3H); alternate). The disordered stretch occupies residues 71 to 97 (YDREMKDYGPAKGGKKKKDPNAPKRPP). Ser98 is modified (phosphoserine). Cysteine sulfonic acid (-SO3H) is present on Cys104. Residues Lys112 and Lys139 each carry the N6-acetyllysine modification. Residues 163–200 (KGKFDGAKGAAKVARKKVEEEDEEDEEEEEEEEEEEDE) form a disordered region. Acidic residues predominate over residues 182–200 (EEDEEDEEEEEEEEEEEDE).

Belongs to the HMGB family. Reduction/oxidation of cysteine residues Cys-23, Cys-45 and Cys-104 and a possible intramolecular disulfide bond involving Cys-23 and Cys-45 give rise to different redox forms with specific functional activities in various cellular compartments: 1- fully reduced HMGB3 (HMGB3C23hC45hC104h), 2- disulfide HMGB3 (HMGB3C23-C45C104h) and 3- sulfonyl HMGB3 (HMGB3C23soC45soC104so).

The protein localises to the nucleus. It localises to the chromosome. Its subcellular location is the cytoplasm. In terms of biological role, multifunctional protein with various roles in different cellular compartments. May act in a redox sensitive manner. Associates with chromatin and binds DNA with a preference for non-canonical DNA structures such as single-stranded DNA. Can bend DNA and enhance DNA flexibility by looping thus providing a mechanism to promote activities on various gene promoters. Proposed to be involved in the innate immune response to nucleic acids by acting as a cytoplasmic promiscuous immunogenic DNA/RNA sensor. Negatively regulates B-cell and myeloid cell differentiation. In hematopoietic stem cells may regulate the balance between self-renewal and differentiation. Involved in negative regulation of canonical Wnt signaling. The sequence is that of High mobility group protein B3 (HMGB3) from Bos taurus (Bovine).